A 76-amino-acid polypeptide reads, in one-letter code: MSLAKPAMRGLLGKRLRFHLPIAFTLSLVAALGFKYGVTEPRKQAYADFYKQYDAVKDFNAMREAGIFESVRPSGE.

Over 2–10 (SLAKPAMRG) the chain is Mitochondrial matrix. A helical transmembrane segment spans residues 11-51 (LLGKRLRFHLPIAFTLSLVAALGFKYGVTEPRKQAYADFYK). Residues 52–76 (QYDAVKDFNAMREAGIFESVRPSGE) lie on the Mitochondrial intermembrane side of the membrane.

The protein belongs to the cytochrome c oxidase subunit 6c family. As to quaternary structure, component of the cytochrome c oxidase (complex IV, CIV), a multisubunit enzyme composed of 14 subunits. The complex is composed of a catalytic core of 3 subunits MT-CO1, MT-CO2 and MT-CO3, encoded in the mitochondrial DNA, and 11 supernumerary subunits COX4I, COX5A, COX5B, COX6A, COX6B, COX6C, COX7A, COX7B, COX7C, COX8 and NDUFA4, which are encoded in the nuclear genome. The complex exists as a monomer or a dimer and forms supercomplexes (SCs) in the inner mitochondrial membrane with NADH-ubiquinone oxidoreductase (complex I, CI) and ubiquinol-cytochrome c oxidoreductase (cytochrome b-c1 complex, complex III, CIII), resulting in different assemblies (supercomplex SCI(1)III(2)IV(1) and megacomplex MCI(2)III(2)IV(2)).

It is found in the mitochondrion inner membrane. It functions in the pathway energy metabolism; oxidative phosphorylation. In terms of biological role, component of the cytochrome c oxidase, the last enzyme in the mitochondrial electron transport chain which drives oxidative phosphorylation. The respiratory chain contains 3 multisubunit complexes succinate dehydrogenase (complex II, CII), ubiquinol-cytochrome c oxidoreductase (cytochrome b-c1 complex, complex III, CIII) and cytochrome c oxidase (complex IV, CIV), that cooperate to transfer electrons derived from NADH and succinate to molecular oxygen, creating an electrochemical gradient over the inner membrane that drives transmembrane transport and the ATP synthase. Cytochrome c oxidase is the component of the respiratory chain that catalyzes the reduction of oxygen to water. Electrons originating from reduced cytochrome c in the intermembrane space (IMS) are transferred via the dinuclear copper A center (CU(A)) of subunit 2 and heme A of subunit 1 to the active site in subunit 1, a binuclear center (BNC) formed by heme A3 and copper B (CU(B)). The BNC reduces molecular oxygen to 2 water molecules using 4 electrons from cytochrome c in the IMS and 4 protons from the mitochondrial matrix. This is Cytochrome c oxidase subunit 6C-1 from Thunnus obesus (Bigeye tuna).